A 279-amino-acid polypeptide reads, in one-letter code: Dermonecrotic toxin LrSicTox-alphaIA1i (279 aa).

The active site involves histidine 11. Mg(2+) is bound by residues glutamate 31 and aspartate 33. Residue histidine 47 is the Nucleophile of the active site. Intrachain disulfides connect cysteine 51–cysteine 57 and cysteine 53–cysteine 196. Aspartate 91 serves as a coordination point for Mg(2+). N-linked (GlcNAc...) asparagine glycosylation occurs at asparagine 256.

The protein belongs to the arthropod phospholipase D family. Class II subfamily. The cofactor is Mg(2+). Expressed by the venom gland.

The protein resides in the secreted. The catalysed reaction is an N-(acyl)-sphingosylphosphocholine = an N-(acyl)-sphingosyl-1,3-cyclic phosphate + choline. It catalyses the reaction an N-(acyl)-sphingosylphosphoethanolamine = an N-(acyl)-sphingosyl-1,3-cyclic phosphate + ethanolamine. It carries out the reaction a 1-acyl-sn-glycero-3-phosphocholine = a 1-acyl-sn-glycero-2,3-cyclic phosphate + choline. The enzyme catalyses a 1-acyl-sn-glycero-3-phosphoethanolamine = a 1-acyl-sn-glycero-2,3-cyclic phosphate + ethanolamine. With respect to regulation, inhibited with low affinity by edelfosine. Dermonecrotic toxins cleave the phosphodiester linkage between the phosphate and headgroup of certain phospholipids (sphingolipid and lysolipid substrates), forming an alcohol (often choline) and a cyclic phosphate. This toxin acts on sphingomyelin (SM). It also acts on a broad range of lysophospholipids, like lysophosphatidylinositol (LPI), lysophosphatidylglycerol (LPG), lysophosphatidylethanolamine (LPE), lysobisphosphatidic acid (LBPA), lysophosphatidylserine (LPS) and lysophosphatidylcholines (LPC) of varying chain lengths. The substrate preference is LPI &gt; LPG &gt; LPS &gt; LPC &gt;&gt; LPE, LBPA. Furthermore, the enzyme also act on cyclic phosphatidic acid and lyso-platelet activating factor (LPAF, an alkyl-LPC). The enzyme does not act on sphingosylphosphorylcholine (SPC, also known as lyso-sphingomyelin) and PAF. The toxin may also act on ceramide phosphoethanolamine (CPE). It acts by transphosphatidylation, releasing exclusively cyclic phosphate products as second products. It does not exhibit detectable PLA1/2 activity. It induces dose-dependent hemolysis and dermonecrosis. Also induces increased vascular permeability, edema, inflammatory response, and platelet aggregation. The chain is Dermonecrotic toxin LrSicTox-alphaIA1i from Loxosceles reclusa (Brown recluse spider).